A 131-amino-acid polypeptide reads, in one-letter code: UPF0102 protein YraN (131 aa).

This sequence belongs to the UPF0102 family.

The polypeptide is UPF0102 protein YraN (Salmonella typhimurium (strain LT2 / SGSC1412 / ATCC 700720)).